A 522-amino-acid chain; its full sequence is Sensory neuron membrane protein 1 (522 aa).

The Cytoplasmic portion of the chain corresponds to 1–11; it reads MQLAKPLKYAA. The chain crosses the membrane as a helical span at residues 12-32; sequence ISGIVAFVGLMFGWVIFPAIL. Residues 33 to 458 lie on the Extracellular side of the membrane; that stretch reads KSQLKKEMAL…SQLFIPKRVV (426 aa). N-linked (GlcNAc...) asparagine glycans are attached at residues Asn-67, Asn-105, and Asn-229. Intrachain disulfides connect Cys-268–Cys-333, Cys-297–Cys-352, and Cys-335–Cys-341. A glycan (N-linked (GlcNAc...) asparagine) is linked at Asn-440. A helical transmembrane segment spans residues 459 to 479; the sequence is SVVCWCMISFGSLGVIAAVIF. Topologically, residues 480-522 are cytoplasmic; it reads HFKGDIMHLAVAGDNSVSKIKPENDENKEVGVMGQNQEPAKVM. Residues 500-522 are disordered; the sequence is KPENDENKEVGVMGQNQEPAKVM. Residues 513 to 522 are compositionally biased toward polar residues; that stretch reads GQNQEPAKVM.

Belongs to the CD36 family. In terms of tissue distribution, principal component of the olfactory cilia membrane. Detected in both male and female antennae but not present in leg, abdomen, thorax or head.

The protein resides in the cell membrane. Plays an olfactory role that is not restricted to pheromone sensitivity. The protein is Sensory neuron membrane protein 1 of Bombyx mori (Silk moth).